Reading from the N-terminus, the 172-residue chain is Small ribosomal subunit protein uS5 (172 aa).

Residues 13 to 76 (LVEKMISVNR…EQARHNMMKI (64 aa)) enclose the S5 DRBM domain.

Belongs to the universal ribosomal protein uS5 family. In terms of assembly, part of the 30S ribosomal subunit. Contacts proteins S4 and S8.

Its function is as follows. With S4 and S12 plays an important role in translational accuracy. Functionally, located at the back of the 30S subunit body where it stabilizes the conformation of the head with respect to the body. In Chromobacterium violaceum (strain ATCC 12472 / DSM 30191 / JCM 1249 / CCUG 213 / NBRC 12614 / NCIMB 9131 / NCTC 9757 / MK), this protein is Small ribosomal subunit protein uS5.